The following is a 121-amino-acid chain: Large ribosomal subunit protein bL12 (121 aa).

Belongs to the bacterial ribosomal protein bL12 family. Homodimer. Part of the ribosomal stalk of the 50S ribosomal subunit. Forms a multimeric L10(L12)X complex, where L10 forms an elongated spine to which 2 to 4 L12 dimers bind in a sequential fashion. Binds GTP-bound translation factors.

Its function is as follows. Forms part of the ribosomal stalk which helps the ribosome interact with GTP-bound translation factors. Is thus essential for accurate translation. The sequence is that of Large ribosomal subunit protein bL12 from Vibrio atlanticus (strain LGP32) (Vibrio splendidus (strain Mel32)).